The primary structure comprises 155 residues: Ribosomal RNA large subunit methyltransferase H (155 aa).

S-adenosyl-L-methionine contacts are provided by residues leucine 73, glycine 104, and 123–128; that span reads LSPLTL.

This sequence belongs to the RNA methyltransferase RlmH family. As to quaternary structure, homodimer.

The protein localises to the cytoplasm. The enzyme catalyses pseudouridine(1915) in 23S rRNA + S-adenosyl-L-methionine = N(3)-methylpseudouridine(1915) in 23S rRNA + S-adenosyl-L-homocysteine + H(+). Its function is as follows. Specifically methylates the pseudouridine at position 1915 (m3Psi1915) in 23S rRNA. In Pseudomonas aeruginosa (strain LESB58), this protein is Ribosomal RNA large subunit methyltransferase H.